Consider the following 331-residue polypeptide: Probable mannose-1-phosphate guanylyltransferase 3 (331 aa).

Residue K3 coordinates diphosphate. Residues G66, N90, D92, G127, and N154 each coordinate GDP-alpha-D-mannose.

Belongs to the transferase hexapeptide repeat family.

It carries out the reaction alpha-D-mannose 1-phosphate + GTP + H(+) = GDP-alpha-D-mannose + diphosphate. Its pathway is nucleotide-sugar biosynthesis; GDP-alpha-D-mannose biosynthesis; GDP-alpha-D-mannose from alpha-D-mannose 1-phosphate (GTP route): step 1/1. Catalyzes a reaction of the Smirnoff-Wheeler pathway, the major route to ascorbate biosynthesis in plants. This Arabidopsis thaliana (Mouse-ear cress) protein is Probable mannose-1-phosphate guanylyltransferase 3.